A 179-amino-acid polypeptide reads, in one-letter code: Sec-independent protein translocase protein TatB (179 aa).

The chain crosses the membrane as a helical span at residues 1 to 21 (MFDLGFWEVLIIMLIGLLILG). Basic and acidic residues-rich tracts occupy residues 75 to 86 (KDVEKNARRFEA) and 94 to 106 (TFRDVGRQADDAA). Positions 75–179 (KDVEKNARRF…QGGGGEEKRQ (105 aa)) are disordered.

Belongs to the TatB family. As to quaternary structure, the Tat system comprises two distinct complexes: a TatABC complex, containing multiple copies of TatA, TatB and TatC subunits, and a separate TatA complex, containing only TatA subunits. Substrates initially bind to the TatABC complex, which probably triggers association of the separate TatA complex to form the active translocon.

It localises to the cell inner membrane. Functionally, part of the twin-arginine translocation (Tat) system that transports large folded proteins containing a characteristic twin-arginine motif in their signal peptide across membranes. Together with TatC, TatB is part of a receptor directly interacting with Tat signal peptides. TatB may form an oligomeric binding site that transiently accommodates folded Tat precursor proteins before their translocation. The protein is Sec-independent protein translocase protein TatB of Alkalilimnicola ehrlichii (strain ATCC BAA-1101 / DSM 17681 / MLHE-1).